The primary structure comprises 74 residues: Insertion element IS986 uncharacterized 8.2 kDa protein (74 aa).

The chain is Insertion element IS986 uncharacterized 8.2 kDa protein from Mycobacterium tuberculosis.